Here is a 132-residue protein sequence, read N- to C-terminus: Dormancy-associated protein 1 (132 aa).

The disordered stretch occupies residues 53-76; sequence MPAAVSPGTPTTPTTPTTPRKDNV. The segment covering 61 to 70 has biased composition (low complexity); that stretch reads TPTTPTTPTT. Residue Thr64 is modified to Phosphothreonine.

It belongs to the DRM1/ARP family. As to expression, isoform 1: Expressed mainly in the low bolt. Isoform 2: Expressed mainly in the low bolt. Detected in flowers. Isoform 4: Expressed mainly in the low bolt. Isoform 5: Expressed mainly in the 6 days old seedlings. Detected in 16 days old seedlings, axil, low bolt and floral samples, but only barely in leaves and top bolt.

This is Dormancy-associated protein 1 from Arabidopsis thaliana (Mouse-ear cress).